We begin with the raw amino-acid sequence, 217 residues long: Large ribosomal subunit protein uL3 (217 aa).

Positions 127-162 are disordered; sequence GFSRGPMSHGSKNHRAPGSTGAGTTPGRIYPGKRMA. The span at 142 to 153 shows a compositional bias: low complexity; that stretch reads APGSTGAGTTPG.

The protein belongs to the universal ribosomal protein uL3 family. In terms of assembly, part of the 50S ribosomal subunit. Forms a cluster with proteins L14 and L19.

Functionally, one of the primary rRNA binding proteins, it binds directly near the 3'-end of the 23S rRNA, where it nucleates assembly of the 50S subunit. The sequence is that of Large ribosomal subunit protein uL3 from Prochlorococcus marinus (strain MIT 9301).